We begin with the raw amino-acid sequence, 4481 residues long: Dynein axonemal heavy chain 17 (4481 aa).

Residues 1-1792 (MPDLRIDYLE…FANICDAQIK (1792 aa)) are stem. Residues 521–569 (LLYMCGGLLERPLILVEVVPRYSVMLEMFNTELDNAKLMYDAQMAASAD) form a Kelch 1 repeat. The stretch at 759–826 (ENVMEYIQEM…GRVANLNKRY (68 aa)) forms a coiled coil. TPR repeat units lie at residues 1533-1566 (VVEA…YLET) and 1688-1722 (IWWT…QLNA). AAA stretches follow at residues 1793 to 2014 (YSYE…VLVV), 2074 to 2295 (KIIK…IGFK), 2401 to 2649 (ELDP…IFQG), and 2747 to 2996 (SYNE…ERRY). ATP contacts are provided by residues 1831–1838 (GPAGTGKT) and 2112–2119 (GNAGSGKS). A Kelch 2 repeat occupies 2229–2275 (ISHLRTATPATVSRAGILYINPADLGWNPVVSSWIERRKVQSEKANL). Residues 2439–2446 (GNAGTGKS) and 2785–2792 (GVGGSGKQ) each bind ATP. The stretch at 2782–2834 (LLVGVGGSGKQSLSRLAAYISALDVFQITLKKGYAIPDLKMDLATQYIKSAVK) is one Kelch 3 repeat. Coiled-coil stretches lie at residues 3011–3071 (YQNL…IQVV) and 3241–3293 (DVAP…EKIK). A stalk region spans residues 3011-3297 (YQNLLAKKRM…TAEKIKCQQE (287 aa)). AAA stretches follow at residues 3389–3616 (LTDD…EIEE) and 3826–4059 (VKNF…VLYN). One copy of the TPR 3 repeat lies at 4138 to 4173 (PESPYLYGLHPNAEIGFLTVTSEKLFRTVLEMQPKE). 2 Kelch repeats span residues 4272–4321 (NLGL…DLLQ) and 4339–4385 (VWLA…DMTA).

Belongs to the dynein heavy chain family. As to quaternary structure, consists of at least two heavy chains and a number of intermediate and light chains.

Its subcellular location is the cytoplasm. The protein localises to the cytoskeleton. It is found in the flagellum axoneme. Its function is as follows. Force generating protein component of the outer dynein arms (ODAs) in the sperm flagellum. Produces force towards the minus ends of microtubules. Dynein has ATPase activity; the force-producing power stroke is thought to occur on release of ADP. Plays a major role in sperm motility, implicated in sperm flagellar assembly and beating. The chain is Dynein axonemal heavy chain 17 from Mus musculus (Mouse).